Consider the following 185-residue polypeptide: Elongation factor P (185 aa).

The protein belongs to the elongation factor P family.

The protein resides in the cytoplasm. The protein operates within protein biosynthesis; polypeptide chain elongation. Functionally, involved in peptide bond synthesis. Stimulates efficient translation and peptide-bond synthesis on native or reconstituted 70S ribosomes in vitro. Probably functions indirectly by altering the affinity of the ribosome for aminoacyl-tRNA, thus increasing their reactivity as acceptors for peptidyl transferase. The sequence is that of Elongation factor P from Clostridioides difficile (strain 630) (Peptoclostridium difficile).